Consider the following 453-residue polypeptide: Bifunctional protein GlmU (453 aa).

The pyrophosphorylase stretch occupies residues 1 to 225 (MHAHVILAAG…AEEALGVNTR (225 aa)). Residues 7–10 (LAAG), K21, Q72, and 77–78 (GT) each bind UDP-N-acetyl-alpha-D-glucosamine. Position 102 (D102) interacts with Mg(2+). Positions 138, 152, 167, and 223 each coordinate UDP-N-acetyl-alpha-D-glucosamine. N223 is a binding site for Mg(2+). The interval 226-246 (EELARVEGVLLRRLRAEWMGK) is linker. Positions 247–453 (GVRMILPETI…GYALRKLGEG (207 aa)) are N-acetyltransferase. UDP-N-acetyl-alpha-D-glucosamine-binding residues include R329 and K347. Catalysis depends on H359, which acts as the Proton acceptor. Y362 and N373 together coordinate UDP-N-acetyl-alpha-D-glucosamine. Acetyl-CoA is bound by residues A376, 382-383 (NY), S401, A419, and R436.

This sequence in the N-terminal section; belongs to the N-acetylglucosamine-1-phosphate uridyltransferase family. It in the C-terminal section; belongs to the transferase hexapeptide repeat family. In terms of assembly, homotrimer. It depends on Mg(2+) as a cofactor.

The protein localises to the cytoplasm. It carries out the reaction alpha-D-glucosamine 1-phosphate + acetyl-CoA = N-acetyl-alpha-D-glucosamine 1-phosphate + CoA + H(+). The catalysed reaction is N-acetyl-alpha-D-glucosamine 1-phosphate + UTP + H(+) = UDP-N-acetyl-alpha-D-glucosamine + diphosphate. The protein operates within nucleotide-sugar biosynthesis; UDP-N-acetyl-alpha-D-glucosamine biosynthesis; N-acetyl-alpha-D-glucosamine 1-phosphate from alpha-D-glucosamine 6-phosphate (route II): step 2/2. It functions in the pathway nucleotide-sugar biosynthesis; UDP-N-acetyl-alpha-D-glucosamine biosynthesis; UDP-N-acetyl-alpha-D-glucosamine from N-acetyl-alpha-D-glucosamine 1-phosphate: step 1/1. Its pathway is bacterial outer membrane biogenesis; LPS lipid A biosynthesis. Functionally, catalyzes the last two sequential reactions in the de novo biosynthetic pathway for UDP-N-acetylglucosamine (UDP-GlcNAc). The C-terminal domain catalyzes the transfer of acetyl group from acetyl coenzyme A to glucosamine-1-phosphate (GlcN-1-P) to produce N-acetylglucosamine-1-phosphate (GlcNAc-1-P), which is converted into UDP-GlcNAc by the transfer of uridine 5-monophosphate (from uridine 5-triphosphate), a reaction catalyzed by the N-terminal domain. This Thermus thermophilus (strain ATCC BAA-163 / DSM 7039 / HB27) protein is Bifunctional protein GlmU.